We begin with the raw amino-acid sequence, 404 residues long: Argininosuccinate synthase (404 aa).

ATP is bound at residue Ala9–Ser17. Position 86 (Tyr86) interacts with L-citrulline. Gly116 contributes to the ATP binding site. L-aspartate-binding residues include Thr118, Asn122, and Asp123. Asn122 serves as a coordination point for L-citrulline. Positions 126, 174, 183, 259, and 271 each coordinate L-citrulline.

The protein belongs to the argininosuccinate synthase family. Type 1 subfamily. As to quaternary structure, homotetramer.

It is found in the cytoplasm. It carries out the reaction L-citrulline + L-aspartate + ATP = 2-(N(omega)-L-arginino)succinate + AMP + diphosphate + H(+). The protein operates within amino-acid biosynthesis; L-arginine biosynthesis; L-arginine from L-ornithine and carbamoyl phosphate: step 2/3. In Listeria welshimeri serovar 6b (strain ATCC 35897 / DSM 20650 / CCUG 15529 / CIP 8149 / NCTC 11857 / SLCC 5334 / V8), this protein is Argininosuccinate synthase.